A 242-amino-acid polypeptide reads, in one-letter code: 1-(5-phosphoribosyl)-5-[(5-phosphoribosylamino)methylideneamino] imidazole-4-carboxamide isomerase (242 aa).

Asp-8 acts as the Proton acceptor in catalysis. Asp-129 (proton donor) is an active-site residue.

It belongs to the HisA/HisF family.

The protein resides in the cytoplasm. It catalyses the reaction 1-(5-phospho-beta-D-ribosyl)-5-[(5-phospho-beta-D-ribosylamino)methylideneamino]imidazole-4-carboxamide = 5-[(5-phospho-1-deoxy-D-ribulos-1-ylimino)methylamino]-1-(5-phospho-beta-D-ribosyl)imidazole-4-carboxamide. It participates in amino-acid biosynthesis; L-histidine biosynthesis; L-histidine from 5-phospho-alpha-D-ribose 1-diphosphate: step 4/9. This is 1-(5-phosphoribosyl)-5-[(5-phosphoribosylamino)methylideneamino] imidazole-4-carboxamide isomerase from Clostridium botulinum (strain ATCC 19397 / Type A).